The sequence spans 174 residues: Crossover junction endodeoxyribonuclease RuvC (174 aa).

Catalysis depends on residues Asp-8, Glu-68, and Asp-140. Residues Asp-8, Glu-68, and Asp-140 each contribute to the Mg(2+) site.

The protein belongs to the RuvC family. As to quaternary structure, homodimer which binds Holliday junction (HJ) DNA. The HJ becomes 2-fold symmetrical on binding to RuvC with unstacked arms; it has a different conformation from HJ DNA in complex with RuvA. In the full resolvosome a probable DNA-RuvA(4)-RuvB(12)-RuvC(2) complex forms which resolves the HJ. Mg(2+) serves as cofactor.

It is found in the cytoplasm. The catalysed reaction is Endonucleolytic cleavage at a junction such as a reciprocal single-stranded crossover between two homologous DNA duplexes (Holliday junction).. In terms of biological role, the RuvA-RuvB-RuvC complex processes Holliday junction (HJ) DNA during genetic recombination and DNA repair. Endonuclease that resolves HJ intermediates. Cleaves cruciform DNA by making single-stranded nicks across the HJ at symmetrical positions within the homologous arms, yielding a 5'-phosphate and a 3'-hydroxyl group; requires a central core of homology in the junction. The consensus cleavage sequence is 5'-(A/T)TT(C/G)-3'. Cleavage occurs on the 3'-side of the TT dinucleotide at the point of strand exchange. HJ branch migration catalyzed by RuvA-RuvB allows RuvC to scan DNA until it finds its consensus sequence, where it cleaves and resolves the cruciform DNA. The chain is Crossover junction endodeoxyribonuclease RuvC from Legionella pneumophila (strain Paris).